Here is a 278-residue protein sequence, read N- to C-terminus: uncharacterized protein (278 aa).

The segment at 251–278 (TLSENKKQKSSSTSPETDSDMSEFFGDN) is disordered.

This is an uncharacterized protein from Aedes pseudoscutellaris reovirus (isolate France) (ApRV).